Reading from the N-terminus, the 634-residue chain is Chaperone protein HtpG (634 aa).

Residues Met-1–Arg-344 are a; substrate-binding. Positions Glu-345–Lys-561 are b. The segment at Leu-562 to Arg-634 is c.

Belongs to the heat shock protein 90 family. Homodimer.

It localises to the cytoplasm. Molecular chaperone. Has ATPase activity. This is Chaperone protein HtpG from Vibrio atlanticus (strain LGP32) (Vibrio splendidus (strain Mel32)).